The chain runs to 25 residues: Neuromedin-U-25 (25 aa).

Asn25 carries the asparagine amide modification.

It belongs to the NmU family.

Its subcellular location is the secreted. Its function is as follows. Stimulates uterine smooth muscle contraction and causes selective vasoconstriction. This chain is Neuromedin-U-25 (NMU), found in Sus scrofa (Pig).